The sequence spans 1439 residues: Microtubule organization protein AKNA (1439 aa).

Basic and acidic residues-rich tracts occupy residues 1-10 and 25-35; these read MASSETEIRW and AWAEDKRDVDR. A disordered region spans residues 1–394; sequence MASSETEIRW…NRKPQAPARP (394 aa). Residue S52 is modified to Phosphoserine. Positions 71-83 are enriched in basic and acidic residues; it reads WDPHPQPDGHQDS. Over residues 89-99 the composition is skewed to acidic residues; the sequence is SGEEAEAEDVD. Residues 263–275 show a composition bias toward polar residues; that stretch reads QDSSAPPAQSPQH. Residues 276 to 285 show a composition bias toward basic and acidic residues; that stretch reads ATDRWRRETT. Phosphoserine occurs at positions 316, 499, and 534. 2 disordered regions span residues 507–562 and 659–682; these read SAEW…SAEQ and IDQT…PALP. Residues 533 to 544 show a composition bias toward low complexity; the sequence is LSPSSLTSMPTL. Residues S767 and S770 each carry the phosphoserine modification. The tract at residues 771–804 is PEST; sequence LPEAMRMEEEEEGEEEEEEEGGGDSLEVDGVAAT. Disordered regions lie at residues 775-942 and 977-1005; these read MRME…QTPE and IPRR…LRQR. The span at 778–792 shows a compositional bias: acidic residues; the sequence is EEEEEGEEEEEEEGG. A Phosphoserine modification is found at S848. Positions 865–875 are enriched in pro residues; sequence PPGPGVPPHPP. Composition is skewed to polar residues over residues 879–891, 929–940, and 983–999; these read SAAS…TSLE, SETSRVSPLTQT, and EPST…SSPS. Residue S886 is modified to Phosphoserine. Positions 911 to 932 are PEST; sequence HLEETWMASPETDSGFVGSETS. Phosphoserine is present on residues S997 and S1010. The tract at residues 1095–1165 is disordered; the sequence is LHQPLQGSPT…RARSSSVPRE (71 aa). The segment at residues 1115–1123 is a DNA-binding region (a.T hook); the sequence is RTRGRPADS. Positions 1135-1147 are enriched in basic and acidic residues; that stretch reads STERLPGEPRGEE. A phosphoserine mark is found at S1172 and S1173. The disordered stretch occupies residues 1180 to 1211; it reads LPLFSEKSKTTKDSPQAARDGKRGVGSAGWPD. At S1228 the chain carries Phosphoserine. Residues 1252–1329 are disordered; that stretch reads AGGAVTGDPL…RPPPGLWYLA (78 aa). Over residues 1303–1317 the composition is skewed to polar residues; it reads SSTPSPKQRSKQAGS. S1377, S1387, and S1424 each carry phosphoserine.

It belongs to the AKNA family. In terms of assembly, interacts with DCTN1. Interacts with MAPRE1/EB1. Interacts with ODF2. Interacts with CAMSAP3. Phosphorylated; phosphorylation regulates dissociation from and reassembly at the centrosome. As to expression, predominantly expressed by lymphoid tissues. Highly expressed in the spleen, lymph nodes and peripheral blood leukocytes, expressed at lower level in the thymus. Mainly expressed by germinal center B-lymphocytes, a stage in which receptor and ligand interactions are crucial for B-lymphocyte maturation. Expressed by B- and T-lymphocytes, Natural killer cells and CD1a(+)CD14(-) but not CD1a(-)CD14(+) dendritic cells. Weakly or not expressed in fetal liver and in adult bone marrow.

Its subcellular location is the cytoplasm. The protein localises to the cytoskeleton. The protein resides in the microtubule organizing center. It is found in the centrosome. It localises to the centriole. Its subcellular location is the nucleus. Centrosomal protein that plays a key role in cell delamination by regulating microtubule organization. Required for the delamination and retention of neural stem cells from the subventricular zone during neurogenesis. Also regulates the epithelial-to-mesenchymal transition in other epithelial cells. Acts by increasing centrosomal microtubule nucleation and recruiting nucleation factors and minus-end stabilizers, thereby destabilizing microtubules at the adherens junctions and mediating constriction of the apical endfoot. In addition, may also act as a transcription factor that specifically activates the expression of the CD40 receptor and its ligand CD40L/CD154, two cell surface molecules on lymphocytes that are critical for antigen-dependent-B-cell development. Binds to A/T-rich promoters. It is unclear how it can both act as a microtubule organizer and as a transcription factor; additional evidences are required to reconcile these two apparently contradictory functions. This is Microtubule organization protein AKNA from Homo sapiens (Human).